Here is a 110-residue protein sequence, read N- to C-terminus: Thioredoxin (110 aa).

Positions 2 to 110 (SALLVEIDKD…IDAMIAKHVG (109 aa)) constitute a Thioredoxin domain. Cysteine 33 and cysteine 36 are disulfide-bonded.

The protein belongs to the thioredoxin family.

Its function is as follows. Participates in various redox reactions through the reversible oxidation of its active center dithiol to a disulfide and catalyzes dithiol-disulfide exchange reactions. This chain is Thioredoxin (trxA), found in Peptoclostridium acidaminophilum (Eubacterium acidaminophilum).